The primary structure comprises 505 residues: MEEFQGYLDXNRSRQHYLLYPLLFREYIYALAHDHGLNRSILFENAGYDNKXSSIIVKRLITRMYQQNSLIFSAKDSIQNQFFGHNKNLYSQILSEGFAVIVEIPFSLRFLFSLERKEIAKSHNLRSIHSIFPFLZDXFTHLDYVSDVLIPYHIHLEILVQTLRYWVKDASSLHLLRFFLHDYWNSFITPKKHITFFLKGNPRLFLFLYNSHICEYEYIFLFLRNQSSHLRSTSSGIFFERIHFYVKIEHFHFVKVFFDNNFQCILWFLKDPFMHYVRYQGKFFMASKDTPLLMNKWKCYLVNLWQYHFSVWFQPGRIDINQLCKYSLDFLGYRSSVRLNSSVVRSQMLENLFLINNAMKKFETIVPIIPLIGSLYKSNFCNTFGHPISKPSRTDSSDSDIIDRFLRICRNLSHYHSGSSKKKSLYRVKYILRLSCVKTLARKHKRTVRTFVKRLGSEFFEEFLTEEEVVFSLIFPRTYSTSRRLYRGQIWYLDITSINDLVNYE.

This sequence belongs to the intron maturase 2 family. MatK subfamily.

It is found in the plastid. It localises to the chloroplast. Usually encoded in the trnK tRNA gene intron. Probably assists in splicing its own and other chloroplast group II introns. This Kunzea ericoides (White teatree) protein is Maturase K.